Here is a 662-residue protein sequence, read N- to C-terminus: Probable quinol oxidase subunit 1 (662 aa).

Helical transmembrane passes span 14 to 34 (WMITMAQIGAPFLVIGLIAVI) and 58 to 78 (LMYLICAVLMFVRGGIDALLL). His-102 serves as a coordination point for Fe(II)-heme a. A run of 8 helical transmembrane segments spans residues 103–123 (GVIMIIFMAMPFVFGLWNVVV), 140–160 (ISFWLFFVGMILFNLSFIIGG), 187–207 (VAIQISGIGTLMTGINFFVTI), 228–248 (FITTLIVILAFPVFTVVLALM), 273–293 (FFWVWGHPEVYIVILPAFGIY), 311–331 (MVWATAGIAFLSFLVWVHHFF), 336–356 (GALINSFFSISTMLIGVPTGV), and 376–396 (MLFSLAFIPNFLLGGVTGVML). Cu cation is bound by residues His-279, Tyr-283, His-328, and His-329. A cross-link (1'-histidyl-3'-tyrosine (His-Tyr)) is located at residues 279–283 (HPEVY). His-414 serves as a coordination point for heme a3. Transmembrane regions (helical) follow at residues 415-435 (FHYTLVTGVVFACLAGLIFWY), 451-471 (CFWLFMIGFNVCFLPQFILGL), 492-512 (VISTIGALLMAVGFLFLVVSI), 586-605 (THTGVIMGIFMLLGGFFLIF), and 609-628 (IPAAICLVGILGSLVYQSFV). His-416 provides a ligand contact to Fe(II)-heme a.

This sequence belongs to the heme-copper respiratory oxidase family. Cu cation is required as a cofactor. The cofactor is ferriheme a. Heme A3. serves as cofactor.

It is found in the cell membrane. The catalysed reaction is 2 a quinol + O2 = 2 a quinone + 2 H2O. The protein operates within energy metabolism; oxidative phosphorylation. Its function is as follows. Catalyzes quinol oxidation with the concomitant reduction of oxygen to water. This chain is Probable quinol oxidase subunit 1 (qoxB), found in Staphylococcus haemolyticus (strain JCSC1435).